The chain runs to 159 residues: 6,7-dimethyl-8-ribityllumazine synthase (159 aa).

5-amino-6-(D-ribitylamino)uracil-binding positions include Phe-22, 57–59 (TYE), and 81–83 (TII). 86–87 (ST) provides a ligand contact to (2S)-2-hydroxy-3-oxobutyl phosphate. His-89 acts as the Proton donor in catalysis. Met-114 is a binding site for 5-amino-6-(D-ribitylamino)uracil. Arg-128 lines the (2S)-2-hydroxy-3-oxobutyl phosphate pocket.

It belongs to the DMRL synthase family. In terms of assembly, forms an icosahedral capsid composed of 60 subunits, arranged as a dodecamer of pentamers.

The enzyme catalyses (2S)-2-hydroxy-3-oxobutyl phosphate + 5-amino-6-(D-ribitylamino)uracil = 6,7-dimethyl-8-(1-D-ribityl)lumazine + phosphate + 2 H2O + H(+). Its pathway is cofactor biosynthesis; riboflavin biosynthesis; riboflavin from 2-hydroxy-3-oxobutyl phosphate and 5-amino-6-(D-ribitylamino)uracil: step 1/2. In terms of biological role, catalyzes the formation of 6,7-dimethyl-8-ribityllumazine by condensation of 5-amino-6-(D-ribitylamino)uracil with 3,4-dihydroxy-2-butanone 4-phosphate. This is the penultimate step in the biosynthesis of riboflavin. This is 6,7-dimethyl-8-ribityllumazine synthase from Buchnera aphidicola subsp. Schizaphis graminum (strain Sg).